The chain runs to 304 residues: N-acetylmuramic acid 6-phosphate etherase (304 aa).

The region spanning 57-220 (AVKGLSAGGR…STATMVGLGK (164 aa)) is the SIS domain. Glu85 (proton donor) is an active-site residue. The active site involves Glu116.

The protein belongs to the GCKR-like family. MurNAc-6-P etherase subfamily. As to quaternary structure, homodimer.

It catalyses the reaction N-acetyl-D-muramate 6-phosphate + H2O = N-acetyl-D-glucosamine 6-phosphate + (R)-lactate. It functions in the pathway amino-sugar metabolism; N-acetylmuramate degradation. Its function is as follows. Specifically catalyzes the cleavage of the D-lactyl ether substituent of MurNAc 6-phosphate, producing GlcNAc 6-phosphate and D-lactate. In Cutibacterium acnes (strain DSM 16379 / KPA171202) (Propionibacterium acnes), this protein is N-acetylmuramic acid 6-phosphate etherase.